Here is a 281-residue protein sequence, read N- to C-terminus: MSDYLGAHMSIAGGLHKSVERAVAAGCGTLQIFTRSSNQWKGKPVSDKDADLFRSSFAASGLHEVISHDIYLINLAAPAGDTRDKSLAAFGDEMATCARLGINKIVMHPGSHTTDSPEAGLERVISAFDQLFEQTPEYEGLVLLETTAGQGTNLGRTFEELQTIINGSKYPDRFGICFDTCHTFAAGYNTATPEGYADVMAQFDRLLGLERLLCFHFNDSKKGLGSRVDRHEHIGQGTLGLEPFRFIMHDPRFITVPKILETPKGDDDAMDQVNLALLRSL.

Zn(2+) contacts are provided by histidine 68, histidine 108, glutamate 145, aspartate 179, histidine 182, histidine 216, aspartate 229, histidine 231, and glutamate 261.

It belongs to the AP endonuclease 2 family. Zn(2+) serves as cofactor.

It carries out the reaction Endonucleolytic cleavage to 5'-phosphooligonucleotide end-products.. In terms of biological role, endonuclease IV plays a role in DNA repair. It cleaves phosphodiester bonds at apurinic or apyrimidinic (AP) sites, generating a 3'-hydroxyl group and a 5'-terminal sugar phosphate. This is Probable endonuclease 4 from Trichlorobacter lovleyi (strain ATCC BAA-1151 / DSM 17278 / SZ) (Geobacter lovleyi).